The following is a 369-amino-acid chain: MFGFGPSYDSYKLKVQLKLAVSRIQILKNKKANIVRDEKRNVAELLRKKNEESARIRVETIIRDEYLIECFQIIEVLCELLHARINLINATTEMPLEMKESIFTLVYSSQRIQIPELEQIKNQLKAKYGKGLENEANCHCSTHVNPKIVHKLSYATPDPSIIFQTLSEIAEKFNVDWCGSDYPPPPQLIMPQPIIVQQQPQILQPPPQIIHHQQQPQILQPPPQIIQQQQQPQMPSFPIMSPPQQPTFSQIQHQQQIQQQYQQQQQSPQFPSAPPSFYNNNSGNQTPQFPTISTNNSDGYSNDKFNNGNNNYNNNNNNNNNNNNNNNHNNNNNNNNNIPPPYQPSSDTGYPDYDELTARFEALKRSNDF.

The stretch at 12–59 (KLKVQLKLAVSRIQILKNKKANIVRDEKRNVAELLRKKNEESARIRVE) forms a coiled coil. Residues 224-354 (QIIQQQQQPQ…SSDTGYPDYD (131 aa)) form a disordered region. Composition is skewed to low complexity over residues 225–239 (IIQQQQQPQMPSFPI) and 246–270 (PTFSQIQHQQQIQQQYQQQQQSPQF). Residues 277 to 305 (FYNNNSGNQTPQFPTISTNNSDGYSNDKF) show a composition bias toward polar residues. Low complexity predominate over residues 306 to 337 (NNGNNNYNNNNNNNNNNNNNNNHNNNNNNNNN).

This sequence belongs to the IST1 family.

This Dictyostelium discoideum (Social amoeba) protein is IST1-like protein.